Consider the following 153-residue polypeptide: Probable histone H2A.4 (153 aa).

A compositionally biased stretch (basic residues) spans 1-12 (MDSGTKVKKGAA). 2 disordered regions span residues 1–30 (MDSGTKVKKGAAGRRSGGGPKKKPVSRSVK) and 129–153 (KSEKAASTTKTPKSPSKATKSPKKS). The span at 133–147 (AASTTKTPKSPSKAT) shows a compositional bias: low complexity. An SPKK motif motif is present at residues 149–152 (SPKK).

Belongs to the histone H2A family. As to quaternary structure, the nucleosome is a histone octamer containing two molecules each of H2A, H2B, H3 and H4 assembled in one H3-H4 heterotetramer and two H2A-H2B heterodimers. The octamer wraps approximately 147 bp of DNA. Not ubiquitinated.

The protein resides in the nucleus. It localises to the chromosome. Core component of nucleosome. Nucleosomes wrap and compact DNA into chromatin, limiting DNA accessibility to the cellular machineries which require DNA as a template. Histones thereby play a central role in transcription regulation, DNA repair, DNA replication and chromosomal stability. DNA accessibility is regulated via a complex set of post-translational modifications of histones, also called histone code, and nucleosome remodeling. This chain is Probable histone H2A.4, found in Arabidopsis thaliana (Mouse-ear cress).